The chain runs to 507 residues: Pyridoxine 4-oxidase (507 aa).

H448 serves as the catalytic Proton acceptor.

The protein belongs to the GMC oxidoreductase family. As to quaternary structure, monomer. FAD serves as cofactor.

The enzyme catalyses pyridoxine + O2 = pyridoxal + H2O2. It participates in cofactor degradation; B6 vitamer degradation; pyridoxal from pyridoxine (oxidase route): step 1/1. This chain is Pyridoxine 4-oxidase (pno), found in Microbacterium luteolum (Aureobacterium luteolum).